A 418-amino-acid chain; its full sequence is Tyrosine--tRNA ligase (418 aa).

L-tyrosine is bound at residue Y35. Positions 40–49 (PTAKSLHIGH) match the 'HIGH' region motif. L-tyrosine-binding residues include Y168 and Q172. The 'KMSKS' region signature appears at 228–232 (KYGKT). K231 lines the ATP pocket. In terms of domain architecture, S4 RNA-binding spans 352-410 (PTVVGAMVAAGVVDTKSGGRRAVAEGGAYLNNVKVADPDQRLTDDDFLCGRVALVRRGK).

The protein belongs to the class-I aminoacyl-tRNA synthetase family. TyrS type 1 subfamily. Homodimer.

It localises to the cytoplasm. It catalyses the reaction tRNA(Tyr) + L-tyrosine + ATP = L-tyrosyl-tRNA(Tyr) + AMP + diphosphate + H(+). Functionally, catalyzes the attachment of tyrosine to tRNA(Tyr) in a two-step reaction: tyrosine is first activated by ATP to form Tyr-AMP and then transferred to the acceptor end of tRNA(Tyr). The sequence is that of Tyrosine--tRNA ligase from Cutibacterium acnes (strain DSM 16379 / KPA171202) (Propionibacterium acnes).